Reading from the N-terminus, the 342-residue chain is tRNA N6-adenosine threonylcarbamoyltransferase (342 aa).

His-114 and His-118 together coordinate Fe cation. Substrate-binding positions include 136 to 140 (LVSGG), Asp-169, Gly-182, Asp-186, and Asn-275. Asp-301 provides a ligand contact to Fe cation.

Belongs to the KAE1 / TsaD family. It depends on Fe(2+) as a cofactor.

The protein localises to the cytoplasm. It catalyses the reaction L-threonylcarbamoyladenylate + adenosine(37) in tRNA = N(6)-L-threonylcarbamoyladenosine(37) in tRNA + AMP + H(+). In terms of biological role, required for the formation of a threonylcarbamoyl group on adenosine at position 37 (t(6)A37) in tRNAs that read codons beginning with adenine. Is involved in the transfer of the threonylcarbamoyl moiety of threonylcarbamoyl-AMP (TC-AMP) to the N6 group of A37, together with TsaE and TsaB. TsaD likely plays a direct catalytic role in this reaction. The polypeptide is tRNA N6-adenosine threonylcarbamoyltransferase (Streptococcus pyogenes serotype M18 (strain MGAS8232)).